The primary structure comprises 315 residues: Protoheme IX farnesyltransferase (315 aa).

The next 9 helical transmembrane spans lie at 34–54, 55–75, 105–125, 127–147, 155–175, 177–197, 226–246, 251–271, and 294–314; these read VISLVVFTGAAGLAMAPGPIN, PLIAAVSILCICMASGAAGAI, ALGFGIGLSVASVLLMWLAAN, LAAFILAFSIFFYAVIYTMWL, IVIGGAAGAFPPMIGWAATTG, LGVLPVVMFAIVFLWTPPHFW, WQILFYTLILSAVSLVPSFLH, LYTGVASLLDAGFVACAVGVL, and YSLAYLFLLFCGLLADHFLIM.

The protein belongs to the UbiA prenyltransferase family. Protoheme IX farnesyltransferase subfamily.

Its subcellular location is the cell inner membrane. The catalysed reaction is heme b + (2E,6E)-farnesyl diphosphate + H2O = Fe(II)-heme o + diphosphate. Its pathway is porphyrin-containing compound metabolism; heme O biosynthesis; heme O from protoheme: step 1/1. Its function is as follows. Converts heme B (protoheme IX) to heme O by substitution of the vinyl group on carbon 2 of heme B porphyrin ring with a hydroxyethyl farnesyl side group. The chain is Protoheme IX farnesyltransferase from Gluconacetobacter diazotrophicus (strain ATCC 49037 / DSM 5601 / CCUG 37298 / CIP 103539 / LMG 7603 / PAl5).